A 68-amino-acid chain; its full sequence is Large ribosomal subunit protein bL32 (68 aa).

The protein belongs to the bacterial ribosomal protein bL32 family.

This chain is Large ribosomal subunit protein bL32, found in Orientia tsutsugamushi (strain Boryong) (Rickettsia tsutsugamushi).